A 466-amino-acid polypeptide reads, in one-letter code: Cysteine--tRNA ligase (466 aa).

Cys-29 is a binding site for Zn(2+). The 'HIGH' region motif lies at 31–41 (ATVQAPPHIGH). The Zn(2+) site is built by Cys-211, His-236, and Glu-240. A 'KMSKS' region motif is present at residues 267–271 (KMSKS). Lys-270 serves as a coordination point for ATP.

Belongs to the class-I aminoacyl-tRNA synthetase family. Monomer. Zn(2+) is required as a cofactor.

Its subcellular location is the cytoplasm. The catalysed reaction is tRNA(Cys) + L-cysteine + ATP = L-cysteinyl-tRNA(Cys) + AMP + diphosphate. The polypeptide is Cysteine--tRNA ligase (Thermobifida fusca (strain YX)).